The primary structure comprises 470 residues: Flotillin-like protein 1 (470 aa).

The S-palmitoyl cysteine moiety is linked to residue Cys-35. Positions 305-354 form a coiled coil; the sequence is EYETKVQEANWELYNKQKQAEAVLYEKQKQAEAQKAQADAAFYSKQKEAE.

Belongs to the band 7/mec-2 family. Flotillin subfamily. Post-translationally, may be palmitoylated.

Its subcellular location is the cell membrane. The protein localises to the membrane. The protein resides in the caveola. Its function is as follows. May act as a scaffolding protein within caveolar membranes, functionally participating in formation of caveolae or caveolae-like vesicles. The polypeptide is Flotillin-like protein 1 (FLOT1) (Arabidopsis thaliana (Mouse-ear cress)).